Reading from the N-terminus, the 170-residue chain is dCTP pyrophosphatase 1 (170 aa).

A disordered region spans residues 1–25 (MSTAGDGERGTVGQEDSAAARPFRF). S2 carries the N-acetylserine modification. S2 is subject to Phosphoserine. Substrate contacts are provided by residues H38 and 47–51 (WEQFH). Residues E63 and E66 each coordinate Mg(2+). W73 is a substrate binding site. Residues E95 and D98 each contribute to the Mg(2+) site. Y102 serves as a coordination point for substrate. The interval 150-170 (SENQAVGAGDPASELRDQAST) is disordered.

As to quaternary structure, homotetramer. Requires Mg(2+) as cofactor. As to expression, ubiquitous. Highly expressed in heart, liver, skeletal muscle, cerebellum, brain, and salivary gland.

Its subcellular location is the cytoplasm. It localises to the cytosol. The catalysed reaction is dCTP + H2O = dCMP + diphosphate + H(+). Inhibited by divalent calcium or cadmium ions. Its function is as follows. Hydrolyzes deoxynucleoside triphosphates (dNTPs) to the corresponding nucleoside monophosphates. Has a strong preference for dCTP and its analogs including 5-iodo-dCTP and 5-methyl-dCTP for which it may even have a higher efficiency. May protect DNA or RNA against the incorporation of these genotoxic nucleotide analogs through their catabolism. The sequence is that of dCTP pyrophosphatase 1 from Mus musculus (Mouse).